Here is a 100-residue protein sequence, read N- to C-terminus: NADH-quinone oxidoreductase subunit K (100 aa).

The next 3 helical transmembrane spans lie at 1 to 21 (MIGLNHYLIVSGLLFCIGLAG), 28 to 48 (ILLLFFSTEIMLNAINIGFIA), and 64 to 84 (FIIAIAASEVAIGLGLVILWF).

Belongs to the complex I subunit 4L family. As to quaternary structure, NDH-1 is composed of 14 different subunits. Subunits NuoA, H, J, K, L, M, N constitute the membrane sector of the complex.

It is found in the cell inner membrane. It carries out the reaction a quinone + NADH + 5 H(+)(in) = a quinol + NAD(+) + 4 H(+)(out). Functionally, NDH-1 shuttles electrons from NADH, via FMN and iron-sulfur (Fe-S) centers, to quinones in the respiratory chain. The immediate electron acceptor for the enzyme in this species is believed to be ubiquinone. Couples the redox reaction to proton translocation (for every two electrons transferred, four hydrogen ions are translocated across the cytoplasmic membrane), and thus conserves the redox energy in a proton gradient. This Helicobacter acinonychis (strain Sheeba) protein is NADH-quinone oxidoreductase subunit K.